The following is an 89-amino-acid chain: Large ribosomal subunit protein eL34 (89 aa).

It belongs to the eukaryotic ribosomal protein eL34 family.

The sequence is that of Large ribosomal subunit protein eL34 from Methanococcus vannielii (strain ATCC 35089 / DSM 1224 / JCM 13029 / OCM 148 / SB).